The sequence spans 289 residues: MPKASHQDLRFAFRELLASGSCYHTASVFDPMSARIAADLGFEVGILGGSVASLQVLAAPDFALITLSEFVEQATRIGRVAQLPVLADADHGYGNALNVMRTVIELERAGVAALTIEDTLLPAQFGRKSTDLIPVEEGVGKIRAALEARVDSSLSIIARTNAGVLSTEEIIVRTQSYQKAGADAICMVGVKDFEQLEQIAGHLSVPLMLVTYANPNLHDDERLARLGVRIVVDGHAAYFAAIKATYDCLRLQRGQQNKSENLTATELSHTYTQPEDYIRWAKEYMSVDE.

Serine 50 is a binding site for substrate. Aspartate 88 serves as a coordination point for Mg(2+). Positions 159 and 235 each coordinate substrate.

Belongs to the isocitrate lyase/PEP mutase superfamily. Oxaloacetate decarboxylase family. As to quaternary structure, homotetramer; dimer of dimers. It depends on Mg(2+) as a cofactor.

The enzyme catalyses oxaloacetate + H(+) = pyruvate + CO2. Its function is as follows. Catalyzes the decarboxylation of oxaloacetate into pyruvate. Seems to play a role in maintaining cellular concentrations of bicarbonate and pyruvate. This Pseudomonas putida (strain W619) protein is Oxaloacetate decarboxylase 1.